Consider the following 254-residue polypeptide: Citrate synthase-lysine N-methyltransferase CSKMT, mitochondrial (254 aa).

A mitochondrion-targeting transit peptide spans 1–45 (MLLNRFLVPLRSLQKLTQARRWHQTSLINDLVVNMDKKAMWDRFY).

This sequence belongs to the methyltransferase superfamily.

The protein resides in the mitochondrion. It carries out the reaction L-lysyl-[citrate synthase] + S-adenosyl-L-methionine = N(6)-methyl-L-lysyl-[citrate synthase] + S-adenosyl-L-homocysteine + H(+). It catalyses the reaction N(6)-methyl-L-lysyl-[citrate synthase] + S-adenosyl-L-methionine = N(6),N(6)-dimethyl-L-lysyl-[citrate synthase] + S-adenosyl-L-homocysteine + H(+). The enzyme catalyses N(6),N(6)-dimethyl-L-lysyl-[citrate synthase] + S-adenosyl-L-methionine = N(6),N(6),N(6)-trimethyl-L-lysyl-[citrate synthase] + S-adenosyl-L-homocysteine + H(+). With respect to regulation, citrate synthase-lysine methyltransferase activity is inhibited by S-adenosylhomocysteine (AdoHcy) and oxaloacetate (OAA). Functionally, protein-lysine methyltransferase that selectively trimethylates citrate synthase (CS) in mitochondria. Seems to conduct trimethylation in a highly distributive manner rather than in a processive manner, and thus introduces a single methyl group per binding event. The protein is Citrate synthase-lysine N-methyltransferase CSKMT, mitochondrial of Danio rerio (Zebrafish).